Here is a 520-residue protein sequence, read N- to C-terminus: TnpB-like protein L79 (520 aa).

Positions 21-47 (GSKTKKKVFVKKKPPDKKPLKKPVKKT) are enriched in basic residues. The interval 21 to 52 (GSKTKKKVFVKKKPPDKKPLKKPVKKTVKTDK) is disordered. The Zn(2+) site is built by Cys-474, Cys-477, Cys-491, and Cys-494.

This sequence in the central section; belongs to the transposase 2 family. The protein in the C-terminal section; belongs to the transposase 35 family.

This chain is TnpB-like protein L79, found in Acanthamoeba polyphaga mimivirus (APMV).